The primary structure comprises 59 residues: Large ribosomal subunit protein uL30 (59 aa).

This sequence belongs to the universal ribosomal protein uL30 family. In terms of assembly, part of the 50S ribosomal subunit.

This is Large ribosomal subunit protein uL30 from Geotalea uraniireducens (strain Rf4) (Geobacter uraniireducens).